Reading from the N-terminus, the 292-residue chain is Malonyl-S-ACP:biotin-protein carboxyltransferase MADD (292 aa).

A CoA carboxyltransferase C-terminal domain is found at 1 to 281 (MEIMMGQGRL…RGKVMAMMDK (281 aa)).

The protein localises to the cytoplasm. The catalysed reaction is N(6)-biotinyl-L-lysyl-[protein] + malonyl-[ACP] = N(6)-carboxybiotinyl-L-lysyl-[protein] + acetyl-[ACP]. Functionally, gamma subunit of the biotin-dependent malonate decarboxylase multienzyme complex (EC 7.2.4.4). The two subunits MADC and MADD are required for the transfer of the malonate carboxy group from the acyl-carrier protein (ACP) to the prosthetic group of the biotin carrier MADF. Required for the regeneration of ACP. This chain is Malonyl-S-ACP:biotin-protein carboxyltransferase MADD (madD), found in Malonomonas rubra.